Here is a 377-residue protein sequence, read N- to C-terminus: Nitric oxide reductase FlRd-NAD(+) reductase (377 aa).

This sequence belongs to the FAD-dependent oxidoreductase family. FAD serves as cofactor.

The protein resides in the cytoplasm. It carries out the reaction 2 reduced [nitric oxide reductase rubredoxin domain] + NAD(+) + H(+) = 2 oxidized [nitric oxide reductase rubredoxin domain] + NADH. It participates in nitrogen metabolism; nitric oxide reduction. One of at least two accessory proteins for anaerobic nitric oxide (NO) reductase. Reduces the rubredoxin moiety of NO reductase. The protein is Nitric oxide reductase FlRd-NAD(+) reductase of Escherichia fergusonii (strain ATCC 35469 / DSM 13698 / CCUG 18766 / IAM 14443 / JCM 21226 / LMG 7866 / NBRC 102419 / NCTC 12128 / CDC 0568-73).